The primary structure comprises 786 residues: Succinoglycan biosynthesis transport protein ExoP (786 aa).

Topologically, residues 1-42 are cytoplasmic; it reads MNRTAPMKQRSVPLSSIMPSEEQSDGFIDLDRLVAAVFRRAR. A helical membrane pass occupies residues 43–66; that stretch reads LVAAFVVLFIALGAAYLLFATPYY. Residues 67–689 are Periplasmic-facing; that stretch reads TSMTQILLDE…LIENARNAFD (623 aa). 583 to 590 contributes to the ATP binding site; that stretch reads ALPDEGKS. The helical transmembrane segment at 690 to 711 threads the bilayer; it reads YVVVDLAALAPVVDAKAFAPLA. Topologically, residues 712–786 are cytoplasmic; sequence DGILFVVEWG…ENTITENTAA (75 aa).

It to B.solanacearum EpsB.

Its subcellular location is the cell membrane. The protein operates within glycan metabolism; exopolysaccharide biosynthesis. The sequence is that of Succinoglycan biosynthesis transport protein ExoP (exoP) from Rhizobium meliloti (strain 1021) (Ensifer meliloti).